Here is a 181-residue protein sequence, read N- to C-terminus: Dual-action ribosomal maturation protein DarP (181 aa).

The segment at 1 to 23 (MTGIKKPMSQYQDDNELEDWGPS) is disordered.

Belongs to the DarP family.

It is found in the cytoplasm. Member of a network of 50S ribosomal subunit biogenesis factors which assembles along the 30S-50S interface, preventing incorrect 23S rRNA structures from forming. Promotes peptidyl transferase center (PTC) maturation. This chain is Dual-action ribosomal maturation protein DarP, found in Aeromonas salmonicida (strain A449).